A 159-amino-acid polypeptide reads, in one-letter code: ATP synthase subunit b', chloroplastic (159 aa).

A helical membrane pass occupies residues 30 to 47 (LMALQFLALTIILNLIYY).

It belongs to the ATPase B chain family. As to quaternary structure, F-type ATPases have 2 components, F(1) - the catalytic core - and F(0) - the membrane proton channel. F(1) has five subunits: alpha(3), beta(3), gamma(1), delta(1), epsilon(1). F(0) has four main subunits: a(1), b(1), b'(1) and c(10-14). The alpha and beta chains form an alternating ring which encloses part of the gamma chain. F(1) is attached to F(0) by a central stalk formed by the gamma and epsilon chains, while a peripheral stalk is formed by the delta, b and b' chains.

It is found in the plastid. The protein resides in the chloroplast thylakoid membrane. In terms of biological role, f(1)F(0) ATP synthase produces ATP from ADP in the presence of a proton or sodium gradient. F-type ATPases consist of two structural domains, F(1) containing the extramembraneous catalytic core and F(0) containing the membrane proton channel, linked together by a central stalk and a peripheral stalk. During catalysis, ATP synthesis in the catalytic domain of F(1) is coupled via a rotary mechanism of the central stalk subunits to proton translocation. Functionally, component of the F(0) channel, it forms part of the peripheral stalk, linking F(1) to F(0). The b'-subunit is a diverged and duplicated form of b found in plants and photosynthetic bacteria. The sequence is that of ATP synthase subunit b', chloroplastic from Antithamnion sp. (Red alga).